The primary structure comprises 347 residues: MVRDSGACVSVALDAMGADLGPEVAIKGADLVLSGAVPCKHKVHLSIYGKESAVLPVLGKYKLVEKNSVFIDTPDAVLCDDRPSFALRHRRKSSMWCAIEDVKKGVVASAVSAGNTGALMAISRYLLGTLQGIDRPAIATVLPSRKGSFVALDLGANAECAPGLLFQFAIMGRAFARAVLGVEHPKVGLLNIGAEDTKGTYNIQEAFALMRDAKQDINFYGYVEAKEAFDGVADVVVADGFSGNIMLKTCEAVAGLTLHILKKEICSSLMGRAAMRILRSCYFKRTSGSALDVRSYNGAVLLGLNGIVVKSHGSADATAFAHAIKEAVCVISQGDMAKEMISEVSNG.

This sequence belongs to the PlsX family. Homodimer. Probably interacts with PlsY.

The protein localises to the cytoplasm. It catalyses the reaction a fatty acyl-[ACP] + phosphate = an acyl phosphate + holo-[ACP]. It functions in the pathway lipid metabolism; phospholipid metabolism. In terms of biological role, catalyzes the reversible formation of acyl-phosphate (acyl-PO(4)) from acyl-[acyl-carrier-protein] (acyl-ACP). This enzyme utilizes acyl-ACP as fatty acyl donor, but not acyl-CoA. This is Phosphate acyltransferase from Anaplasma marginale (strain St. Maries).